Here is a 203-residue protein sequence, read N- to C-terminus: Outer-membrane lipoprotein carrier protein (203 aa).

A signal peptide spans 1-21 (MKKLIISCCLLATFSAAGAWA). The tract at residues 174–203 (ALKSQQSGPISADKFKFRPPKGVTVDDQRQ) is disordered.

The protein belongs to the LolA family. Monomer.

Its subcellular location is the periplasm. Participates in the translocation of lipoproteins from the inner membrane to the outer membrane. Only forms a complex with a lipoprotein if the residue after the N-terminal Cys is not an aspartate (The Asp acts as a targeting signal to indicate that the lipoprotein should stay in the inner membrane). This Erwinia tasmaniensis (strain DSM 17950 / CFBP 7177 / CIP 109463 / NCPPB 4357 / Et1/99) protein is Outer-membrane lipoprotein carrier protein.